The primary structure comprises 297 residues: Homoserine kinase (297 aa).

82-92 (PLTRGLGSSAS) is a binding site for ATP.

The protein belongs to the GHMP kinase family. Homoserine kinase subfamily.

It is found in the cytoplasm. The catalysed reaction is L-homoserine + ATP = O-phospho-L-homoserine + ADP + H(+). It functions in the pathway amino-acid biosynthesis; L-threonine biosynthesis; L-threonine from L-aspartate: step 4/5. Its function is as follows. Catalyzes the ATP-dependent phosphorylation of L-homoserine to L-homoserine phosphate. The sequence is that of Homoserine kinase from Bacillus cereus (strain AH187).